A 64-amino-acid polypeptide reads, in one-letter code: Large ribosomal subunit protein uL29 (64 aa).

The protein belongs to the universal ribosomal protein uL29 family.

The polypeptide is Large ribosomal subunit protein uL29 (Legionella pneumophila (strain Lens)).